The sequence spans 413 residues: Oxidoreductase vrtI (413 aa).

The Fe2OG dioxygenase domain occupies 235 to 341 (DAESLTTLSM…RYSIAYFLRA (107 aa)). Histidine 262, aspartate 264, and histidine 319 together coordinate Fe cation. Residue arginine 332 coordinates 2-oxoglutarate.

This sequence belongs to the iron/ascorbate-dependent oxidoreductase family.

It participates in secondary metabolite biosynthesis; terpenoid biosynthesis. In terms of biological role, oxidoreductase; part of the gene cluster that mediates the biosynthesis of viridicatumtoxin, a tetracycline-like fungal meroterpenoid with a unique, fused spirobicyclic ring system. The first step of the pathway is the production of the malonamoyl-CoA starter unit for the polyketide synthase vrtA. The aldolase vrtJ may be involved in the synthesis of the malonamate substrate for malonamoyl-CoA synthetase vrtB. The polyketide synthase vrtA then may utilize the malonamoyl-CoA starter unit, followed by sequential condensation of eight malonyl-CoA units to form the polyketide backbone. The cyclization of the last ring could be mediated by the lactamase-like protein vrtG. The proposed post-PKS tailoring steps are a hydroxylation at C5 catalyzed the cytochrome P450 monooxygenase vrtE, a hydroxylation at C12a catalyzed by VrtH and/or VrtI, and an O-methylation by the O-methyltransferase vrtF. VrtC is then proposed to catalyze the transfer of a geranyl group synthesized by vrtD to the aromatic C ring of the tetracyclic polyketide intermediate of viridicatumtoxin to yield previridicatumtoxin. Finally, the cytochrome P450 monooxygenase vrtK catalyzes the spirocyclization of the geranyl moiety of previridicatumtoxin to afford viridicatumtoxin. The chain is Oxidoreductase vrtI from Penicillium aethiopicum.